A 217-amino-acid polypeptide reads, in one-letter code: Probable cutinase 3 (217 aa).

Positions 1–17 (MSLRSLFVAGLATLALA) are cleaved as a signal peptide. 2 disulfide bridges follow: C39/C118 and C65/C79. S129 functions as the Nucleophile in the catalytic mechanism. The cysteines at positions 180 and 187 are disulfide-linked. Residue D184 is part of the active site. Residue H197 is the Proton donor/acceptor of the active site.

It belongs to the cutinase family.

It localises to the secreted. The enzyme catalyses cutin + H2O = cutin monomers.. In terms of biological role, catalyzes the hydrolysis of complex carboxylic polyesters found in the cell wall of plants. Degrades cutin, a macromolecule that forms the structure of the plant cuticle. This chain is Probable cutinase 3, found in Neosartorya fischeri (strain ATCC 1020 / DSM 3700 / CBS 544.65 / FGSC A1164 / JCM 1740 / NRRL 181 / WB 181) (Aspergillus fischerianus).